Consider the following 394-residue polypeptide: ATP phosphoribosyltransferase regulatory subunit (394 aa).

The protein belongs to the class-II aminoacyl-tRNA synthetase family. HisZ subfamily. In terms of assembly, heteromultimer composed of HisG and HisZ subunits.

The protein resides in the cytoplasm. It participates in amino-acid biosynthesis; L-histidine biosynthesis; L-histidine from 5-phospho-alpha-D-ribose 1-diphosphate: step 1/9. Functionally, required for the first step of histidine biosynthesis. May allow the feedback regulation of ATP phosphoribosyltransferase activity by histidine. This Geobacillus kaustophilus (strain HTA426) protein is ATP phosphoribosyltransferase regulatory subunit.